A 471-amino-acid chain; its full sequence is Putative multidrug resistance protein MdtD (471 aa).

Residues 1-11 (MTDLPDSTRWQ) are Periplasmic-facing. Residues 12 to 32 (LWIVAFGFFMQSLDTTIVNTA) form a helical membrane-spanning segment. Over 33-48 (LPSMAQSLGESPLHMH) the chain is Cytoplasmic. Residues 49 to 69 (MVIVSYVLTVAVMLPASGWLA) traverse the membrane as a helical segment. Residues 70-76 (DKVGVRN) lie on the Periplasmic side of the membrane. Residues 77-97 (IFFTAIVLFTLGSLFCALSGT) traverse the membrane as a helical segment. Residues 98–101 (LNEL) lie on the Cytoplasmic side of the membrane. The chain crosses the membrane as a helical span at residues 102–124 (LLARALQGVGGAMMVPVGRLTVM). At 125-137 (KIVPREQYMAAMT) the chain is on the periplasmic side. The chain crosses the membrane as a helical span at residues 138–158 (FVTLPGQVGPLLGPALGGLLV). At 159-164 (EYASWH) the chain is on the cytoplasmic side. The chain crosses the membrane as a helical span at residues 165–185 (WIFLINIPVGIIGAIATLMLM). Topologically, residues 186–196 (PNYTMQTRRFD) are periplasmic. The chain crosses the membrane as a helical span at residues 197–217 (LSGFLLLAVGMAVLTLALDGS). At 218–224 (KGTGLSP) the chain is on the cytoplasmic side. The helical transmembrane segment at 225–245 (LAIAGLVAVGVVALVLYLLHA) threads the bilayer. Residues 246–262 (RNNNRALFSLKLFRTRT) lie on the Periplasmic side of the membrane. The chain crosses the membrane as a helical span at residues 263–283 (FSLGLAGSFAGRIGSGMLPFM). Topologically, residues 284 to 285 (TP) are cytoplasmic. The helical transmembrane segment at 286–306 (VFLQIGLGFSPFHAGLMMIPM) threads the bilayer. The Periplasmic portion of the chain corresponds to 307 to 341 (VLGSMGMKRIVVQVVNRFGYRRVLVATTLGLSLVT). Residues 342–362 (MLFMTTALLGWYYVLPFVLFL) traverse the membrane as a helical segment. At 363-395 (QGMVNSTRFSSMNTLTLKDLPDNLASSGNSLLS) the chain is on the cytoplasmic side. The helical transmembrane segment at 396-416 (MIMQLSMSIGVTIAGLLLGLF) threads the bilayer. Residues 417 to 430 (GSQHVSVDSGTTQT) are Periplasmic-facing. Residues 431–451 (VFMYTWLSMAFIIALPAFIFA) form a helical membrane-spanning segment. Residues 452-471 (RVPNDTHQNVAISRRKRSAQ) are Cytoplasmic-facing.

The protein belongs to the major facilitator superfamily. TCR/Tet family.

It localises to the cell inner membrane. This is Putative multidrug resistance protein MdtD from Escherichia coli O7:K1 (strain IAI39 / ExPEC).